The sequence spans 540 residues: Patellin-4 (540 aa).

Residue serine 53 is modified to Phosphoserine. Residues 61-183 (FADLKESEKK…EKKTEDVVTE (123 aa)) are a coiled coil. Positions 89-140 (LKTKKKESSPMKEKKEEVVKPEAEVEKKKEEAAEEKVEEEKKSEAVVTEEAP) are disordered. Over residues 94–140 (KESSPMKEKKEEVVKPEAEVEKKKEEAAEEKVEEEKKSEAVVTEEAP) the composition is skewed to basic and acidic residues. Lysine 249 participates in a covalent cross-link: Glycyl lysine isopeptide (Lys-Gly) (interchain with G-Cter in ubiquitin). The region spanning 258–428 (GEEFGEDLAT…QYGGFKTVDD (171 aa)) is the CRAL-TRIO domain. The GOLD domain maps to 433–534 (NETVSEVVVK…KKKVLYRYRT (102 aa)).

The protein belongs to the patellin family.

The protein localises to the membrane. Its subcellular location is the cytoplasm. In terms of biological role, carrier protein that may be involved in membrane-trafficking events associated with cell plate formation during cytokinesis. Binds to some hydrophobic molecules such as phosphoinositides and promotes their transfer between the different cellular sites. In Arabidopsis thaliana (Mouse-ear cress), this protein is Patellin-4 (PATL4).